Here is a 222-residue protein sequence, read N- to C-terminus: Ornithine decarboxylase antizyme 1 (222 aa).

The protein belongs to the ODC antizyme family. As to quaternary structure, interacts with ODC1 and thereby sterically blocks ODC homodimerization. Forms a ternary complex with PSMB4 and OAZ1 before PSMB4 is incorporated into the 20S proteasome. Interacts with AZIN2; this interaction disrupts the interaction between the antizyme and ODC1. Interacts with FAM171A1.

Functionally, ornithine decarboxylase (ODC) antizyme protein that negatively regulates ODC activity and intracellular polyamine biosynthesis and uptake in response to increased intracellular polyamine levels. Binds to ODC monomers, inhibiting the assembly of the functional ODC homodimer, and targets the monomers for ubiquitin-independent proteolytic destruction by the 26S proteasome. Triggers ODC degradation by inducing the exposure of a cryptic proteasome-interacting surface of ODC. Stabilizes AZIN2 by interfering with its ubiquitination. Also inhibits cellular uptake of polyamines by inactivating the polyamine uptake transporter. SMAD1/OAZ1/PSMB4 complex mediates the degradation of the CREBBP/EP300 repressor SNIP1. Involved in the translocation of AZIN2 from ER-Golgi intermediate compartment (ERGIC) to the cytosol. This chain is Ornithine decarboxylase antizyme 1 (OAZ1), found in Mesocricetus auratus (Golden hamster).